Here is a 309-residue protein sequence, read N- to C-terminus: Putative rhizopine-binding protein (309 aa).

Positions 1–20 (MKKFIIGIAAAVLVSTAAHA) are cleaved as a signal peptide.

It belongs to the bacterial solute-binding protein 2 family.

The protein resides in the periplasm. Its function is as follows. Involved in rhizopine (L-3-O-methyl-scyllo-inosamine) catabolism. Could be involved in its high affinity transport. In Rhizobium meliloti (Ensifer meliloti), this protein is Putative rhizopine-binding protein (mocB).